A 518-amino-acid chain; its full sequence is UPF0288 protein Mbar_A0706 (518 aa).

This sequence belongs to the UPF0288 family.

The sequence is that of UPF0288 protein Mbar_A0706 from Methanosarcina barkeri (strain Fusaro / DSM 804).